The primary structure comprises 475 residues: Ankyrin repeat, SAM and basic leucine zipper domain-containing protein 1 (475 aa).

The interval 1–24 (MAAGPLRGLAVAGGGESSESEDDG) is disordered. Residues S17, S18, and S20 each carry the phosphoserine modification. ANK repeat units follow at residues 45–74 (ERQE…SVDT), 78–107 (YGWT…NASF), 110–144 (DKQT…DPNV), 148–177 (RLMT…EVNT), 181–210 (NGYT…NKMI), and 214–243 (DGKT…PLEG). The region spanning 272 to 334 (SYTAFGDLEI…KIMAALKELE (63 aa)) is the SAM domain.

Interacts with DDX4, PIWIL1, RANBP9 and TDRD1.

It is found in the cytoplasm. In terms of biological role, plays a central role during spermatogenesis by repressing transposable elements and preventing their mobilization, which is essential for the germline integrity. Acts via the piRNA metabolic process, which mediates the repression of transposable elements during meiosis by forming complexes composed of piRNAs and Piwi proteins and governs the methylation and subsequent repression of transposons. Its association with pi-bodies suggests a participation in the primary piRNAs metabolic process. Required prior to the pachytene stage to facilitate the production of multiple types of piRNAs, including those associated with repeats involved in the regulation of retrotransposons. May act by mediating protein-protein interactions during germ cell maturation. This Ovis aries (Sheep) protein is Ankyrin repeat, SAM and basic leucine zipper domain-containing protein 1 (ASZ1).